The following is a 229-amino-acid chain: Leucyl/phenylalanyl-tRNA--protein transferase (229 aa).

It belongs to the L/F-transferase family.

The protein resides in the cytoplasm. It catalyses the reaction N-terminal L-lysyl-[protein] + L-leucyl-tRNA(Leu) = N-terminal L-leucyl-L-lysyl-[protein] + tRNA(Leu) + H(+). The enzyme catalyses N-terminal L-arginyl-[protein] + L-leucyl-tRNA(Leu) = N-terminal L-leucyl-L-arginyl-[protein] + tRNA(Leu) + H(+). The catalysed reaction is L-phenylalanyl-tRNA(Phe) + an N-terminal L-alpha-aminoacyl-[protein] = an N-terminal L-phenylalanyl-L-alpha-aminoacyl-[protein] + tRNA(Phe). Functions in the N-end rule pathway of protein degradation where it conjugates Leu, Phe and, less efficiently, Met from aminoacyl-tRNAs to the N-termini of proteins containing an N-terminal arginine or lysine. The chain is Leucyl/phenylalanyl-tRNA--protein transferase from Pseudomonas syringae pv. tomato (strain ATCC BAA-871 / DC3000).